Consider the following 591-residue polypeptide: Cytidine monophosphate-N-acetylneuraminic acid hydroxylase (591 aa).

The Rieske domain occupies 16–114 (LASAEVESLK…IENDDENGVS (99 aa)). 4 residues coordinate [2Fe-2S] cluster: Cys-56, His-58, Cys-77, and His-80.

This sequence belongs to the CMP-Neu5Ac hydroxylase family. It depends on [2Fe-2S] cluster as a cofactor.

It localises to the cytoplasm. It carries out the reaction CMP-N-acetyl-beta-neuraminate + 2 Fe(II)-[cytochrome b5] + O2 + 2 H(+) = CMP-N-glycoloyl-beta-neuraminate + 2 Fe(III)-[cytochrome b5] + H2O. The protein operates within amino-sugar metabolism; N-acetylneuraminate metabolism. In terms of biological role, sialic acids are components of carbohydrate chains of glycoconjugates and are involved in cell-cell recognition and cell-pathogen interactions. Catalyzes the conversion of CMP-N-acetylneuraminic acid (CMP-Neu5Ac) into its hydroxylated derivative CMP-N-glycolylneuraminic acid (CMP-Neu5Gc), a sialic acid abundantly expressed at the surface of many cells. The polypeptide is Cytidine monophosphate-N-acetylneuraminic acid hydroxylase (cmah) (Xenopus laevis (African clawed frog)).